A 483-amino-acid chain; its full sequence is Glutamyl-tRNA(Gln) amidotransferase subunit A (483 aa).

Active-site charge relay system residues include lysine 77 and serine 152. Serine 176 acts as the Acyl-ester intermediate in catalysis.

Belongs to the amidase family. GatA subfamily. In terms of assembly, heterotrimer of A, B and C subunits.

The enzyme catalyses L-glutamyl-tRNA(Gln) + L-glutamine + ATP + H2O = L-glutaminyl-tRNA(Gln) + L-glutamate + ADP + phosphate + H(+). Allows the formation of correctly charged Gln-tRNA(Gln) through the transamidation of misacylated Glu-tRNA(Gln) in organisms which lack glutaminyl-tRNA synthetase. The reaction takes place in the presence of glutamine and ATP through an activated gamma-phospho-Glu-tRNA(Gln). The protein is Glutamyl-tRNA(Gln) amidotransferase subunit A of Shouchella clausii (strain KSM-K16) (Alkalihalobacillus clausii).